A 252-amino-acid polypeptide reads, in one-letter code: Imidazole glycerol phosphate synthase subunit HisF (252 aa).

Active-site residues include Asp-11 and Asp-130.

The protein belongs to the HisA/HisF family. In terms of assembly, heterodimer of HisH and HisF.

Its subcellular location is the cytoplasm. It catalyses the reaction 5-[(5-phospho-1-deoxy-D-ribulos-1-ylimino)methylamino]-1-(5-phospho-beta-D-ribosyl)imidazole-4-carboxamide + L-glutamine = D-erythro-1-(imidazol-4-yl)glycerol 3-phosphate + 5-amino-1-(5-phospho-beta-D-ribosyl)imidazole-4-carboxamide + L-glutamate + H(+). Its pathway is amino-acid biosynthesis; L-histidine biosynthesis; L-histidine from 5-phospho-alpha-D-ribose 1-diphosphate: step 5/9. In terms of biological role, IGPS catalyzes the conversion of PRFAR and glutamine to IGP, AICAR and glutamate. The HisF subunit catalyzes the cyclization activity that produces IGP and AICAR from PRFAR using the ammonia provided by the HisH subunit. The chain is Imidazole glycerol phosphate synthase subunit HisF from Bacillus cereus (strain AH187).